Consider the following 65-residue polypeptide: Small hydrophobic protein (65 aa).

Topologically, residues 1–20 are intravirion; sequence MGNTSITIEFTSKFWPYFTL. Residues 6–15 are interaction with host BCAP31; the sequence is ITIEFTSKFW. Residues 21-44 traverse the membrane as a helical; Signal-anchor for type II membrane protein segment; the sequence is IHMILTLISLLIIITIMIAILNKL. An interaction with small-molecule inhibitor region spans residues 38–43; the sequence is IAILNK. Residues 45 to 65 are Virion surface-facing; it reads SEHKTFCNNTLELGQMHQINT. Residue Asn-52 is glycosylated (N-linked (GlcNAc...) asparagine; by host).

This sequence belongs to the orthopneumovirus small hydrophobic protein family. As to quaternary structure, homopentamer forming a funnel-like pore. Interacts with glycoprotein G; this interaction occurs on the surface of virion particles and infected cells. Interacts with host BCAP31 (via C-terminus); this interaction is direct. In terms of processing, four species of SH have been detected in infected cell cytoplasm: a 7.5 kDa non-glycosylated form (SH0), a 13-15 kDa form that contains one or two N-linked carbohydrate side chains of the high-mannose type (SHg), a 21-30 kDa polylactosaminoglycan-modified form of the protein (SHp), and the isoform generated by alternative translational initiation. Of these different forms, SH0 is by far the most abundant protein detected during virus infection. Post-translationally, tyrosine phosphorylated.

The protein localises to the virion membrane. It localises to the host cell membrane. It is found in the host Golgi apparatus membrane. The protein resides in the host endoplasmic reticulum membrane. Its activity is regulated as follows. Channel activity is inhibited by copper. Also inhibited by small-molecule pyronin B. In terms of biological role, viroporin that forms a homopentameric ion channel displaying low ion selectivity. May play a role in virus morphogenesis and pathogenicity at various stages of the viral life cycle. Accumulates at the membrane of the Golgi apparatus in infected cells and may facilitate virus release by modifying the secretory pathway. May enhance host membrane permeability and disrupt cellular ion homeostasis, which can be sensed as damage-associated molecular patterns/danger signals, triggering NLRP3 inflammasome activation and inflammatory immune response. Also inhibits host TNFA-mediated signaling pathway and may delay apoptosis, allowing time for the virus to replicate. The polypeptide is Small hydrophobic protein (Homo sapiens (Human)).